The primary structure comprises 408 residues: Guanine nucleotide-binding protein alpha-14 subunit (408 aa).

Residues 39 to 46 (HSEELEAK), 79 to 86 (GGPLSGKS), 201 to 205 (TRIAD), 216 to 222 (VHSRKAT), 241 to 245 (DVGGQ), 285 to 288 (FPKF), 325 to 328 (NKVD), and Ala-380 contribute to the GTP site. In terms of domain architecture, G-alpha spans 71-408 (SHIKILILGG…KANAKATGLS (338 aa)). The interval 74–87 (KILILGGPLSGKST) is G1 motif. Residue Ser-86 coordinates Mg(2+). A G2 motif region spans residues 214–222 (DIVHSRKAT). Thr-222 contributes to the Mg(2+) binding site. The tract at residues 237-246 (LLMIDVGGQR) is G3 motif. The interval 321–328 (LLFFNKVD) is G4 motif. Residues 378 to 383 (TTATNT) are G5 motif.

The protein belongs to the G-alpha family. As to quaternary structure, g proteins are composed of 3 units; alpha, beta and gamma. The alpha chain contains the guanine nucleotide binding site. Interacts with the dopamine receptor dop-2 (via C-terminus); the interaction is direct.

In terms of biological role, guanine nucleotide-binding proteins (G proteins) are involved as modulators or transducers in various transmembrane signaling systems. In association with the G-protein coupled dopamine receptor dop-2, modulates two types of learning: touch habituation and chemosensory associative conditioning. The chain is Guanine nucleotide-binding protein alpha-14 subunit from Caenorhabditis elegans.